The primary structure comprises 265 residues: Phosphonates import ATP-binding protein PhnC 1 (265 aa).

In terms of domain architecture, ABC transporter spans 3–247 (LRLSAIDLRH…HLDTLYANEQ (245 aa)). 36–43 (GPSGAGKT) serves as a coordination point for ATP.

This sequence belongs to the ABC transporter superfamily. Phosphonates importer (TC 3.A.1.9.1) family. The complex is composed of two ATP-binding proteins (PhnC), two transmembrane proteins (PhnE) and a solute-binding protein (PhnD).

It localises to the cell inner membrane. It catalyses the reaction phosphonate(out) + ATP + H2O = phosphonate(in) + ADP + phosphate + H(+). In terms of biological role, part of the ABC transporter complex PhnCDE involved in phosphonates import. Responsible for energy coupling to the transport system. This Pseudomonas syringae pv. tomato (strain ATCC BAA-871 / DC3000) protein is Phosphonates import ATP-binding protein PhnC 1.